A 90-amino-acid chain; its full sequence is Probable Fe(2+)-trafficking protein (90 aa).

This sequence belongs to the Fe(2+)-trafficking protein family.

In terms of biological role, could be a mediator in iron transactions between iron acquisition and iron-requiring processes, such as synthesis and/or repair of Fe-S clusters in biosynthetic enzymes. This Haemophilus influenzae (strain PittEE) protein is Probable Fe(2+)-trafficking protein.